A 355-amino-acid chain; its full sequence is Inner membrane protein YghQ (355 aa).

The Periplasmic portion of the chain corresponds to 1–37 (MAGFNIKHWFADGAFRTIIRNSAWLGSSNVVSALLGL). The helical transmembrane segment at 38 to 58 (LALSCAGKGMTPAMFGVLVIV) threads the bilayer. Over 59–100 (QSYAKSISDFIKFQTWQLVVQYGTPALTNNNPQQFRNVVSFS) the chain is Cytoplasmic. The helical transmembrane segment at 101–121 (FSLDIVSGAVAIVGGIALLPF) threads the bilayer. The Periplasmic portion of the chain corresponds to 122 to 134 (LSHSLGLDDQSFW). A helical membrane pass occupies residues 135 to 155 (LAALYCTLIPSMASSTPTGIL). Topologically, residues 156-177 (RAVDRFDLIAVQQATKPFLRAA) are cytoplasmic. The chain crosses the membrane as a helical span at residues 178–198 (GSVVAWYFDFGFAGFVIAWYV). The Periplasmic portion of the chain corresponds to 199-261 (SNLVGGTMYW…WSARNSCSTV (63 aa)). A helical membrane pass occupies residues 262-282 (LVGIVLGPAAAGLFKIAMTFF). The Cytoplasmic portion of the chain corresponds to 283 to 323 (DAAGTPAGLLGKSFYPEVMRLDPRTTRPWLLGVKSGLLAGG). A helical membrane pass occupies residues 324-344 (IGILVALAVLIVGKPLISLVF). Over 345–355 (GVKYLEAYDLI) the chain is Periplasmic.

It is found in the cell inner membrane. The polypeptide is Inner membrane protein YghQ (yghQ) (Escherichia coli (strain K12)).